The chain runs to 322 residues: Glycerol-3-phosphate dehydrogenase [NAD(P)+] (322 aa).

The NADPH site is built by W11, R31, R32, and K101. Sn-glycerol 3-phosphate is bound by residues K101 and G130. NADPH is bound at residue A134. Positions 184, 237, 247, 248, and 249 each coordinate sn-glycerol 3-phosphate. The Proton acceptor role is filled by K184. NADPH is bound at residue R248. NADPH-binding residues include V270 and E272.

It belongs to the NAD-dependent glycerol-3-phosphate dehydrogenase family.

Its subcellular location is the cytoplasm. The catalysed reaction is sn-glycerol 3-phosphate + NAD(+) = dihydroxyacetone phosphate + NADH + H(+). It catalyses the reaction sn-glycerol 3-phosphate + NADP(+) = dihydroxyacetone phosphate + NADPH + H(+). Its pathway is membrane lipid metabolism; glycerophospholipid metabolism. Catalyzes the reduction of the glycolytic intermediate dihydroxyacetone phosphate (DHAP) to sn-glycerol 3-phosphate (G3P), the key precursor for phospholipid synthesis. This Thermus thermophilus (strain ATCC BAA-163 / DSM 7039 / HB27) protein is Glycerol-3-phosphate dehydrogenase [NAD(P)+].